The sequence spans 270 residues: tRNA pseudouridine synthase A (270 aa).

Aspartate 52 serves as the catalytic Nucleophile. Residue tyrosine 110 coordinates substrate.

It belongs to the tRNA pseudouridine synthase TruA family. In terms of assembly, homodimer.

It catalyses the reaction uridine(38/39/40) in tRNA = pseudouridine(38/39/40) in tRNA. Formation of pseudouridine at positions 38, 39 and 40 in the anticodon stem and loop of transfer RNAs. The polypeptide is tRNA pseudouridine synthase A (Paraburkholderia phytofirmans (strain DSM 17436 / LMG 22146 / PsJN) (Burkholderia phytofirmans)).